Here is an 857-residue protein sequence, read N- to C-terminus: Envelope glycoprotein gp160 (857 aa).

The first 22 residues, 1–22, serve as a signal peptide directing secretion; that stretch reads MDSRNQLIVAILLTSACLIYCA. Residues 23–671 are Extracellular-facing; that stretch reads QYVTVFYGIP…LTSWIKYIQY (649 aa). Residue Asn36 is glycosylated (N-linked (GlcNAc...) asparagine; by host). Cysteines 43 and 56 form a disulfide. N-linked (GlcNAc...) asparagine; by host glycans are attached at residues Asn69, Asn78, Asn113, Asn121, Asn134, Asn142, Asn159, Asn186, Asn198, Asn230, Asn233, Asn264, Asn270, Asn281, Asn292, Asn302, Asn358, Asn364, Asn391, Asn440, and Asn455. 5 disulfides stabilise this stretch: Cys100-Cys206, Cys107-Cys197, Cys112-Cys156, Cys219-Cys249, and Cys229-Cys241. A V1 region spans residues 112–155; it reads CNSTSTESSNSTSEGSTVPEILNETTSCITNNSCSDLGSEEVVD. Residues 156 to 197 form a V2 region; that stretch reads CRFNMTGLQLDKPQQYSETWYSKDVVCDTTNGTSRKCYMNHC. Positions 297–330 are V3; that stretch reads CKRPGNKSVLPITLRSGRVFHSRPIINERPKQAW. Cys297 and Cys331 are oxidised to a cystine. 2 cysteine pairs are disulfide-bonded: Cys383–Cys439 and Cys390–Cys412. Residues 390-412 form a V4 region; sequence CNMTRFLNWIENRAHPQRNYAPC. Residues 454–461 form a V5 region; that stretch reads DNQTSITF. A fusion peptide region spans residues 504-524; that stretch reads GVFVLGVLGFLATAGSAMGAA. The interval 567 to 583 is immunosuppression; that stretch reads LQTRVTAIEKYLRDQAR. Asn603, Asn612, and Asn628 each carry an N-linked (GlcNAc...) asparagine; by host glycan. Positions 616–644 form a coiled coil; sequence QEWEQQTRDLEANISRSLEQAQIQQEKNM. The segment at 649 to 670 is MPER; binding to GalCer; that stretch reads KLNSWDVFGNWFDLTSWIKYIQ. A helical transmembrane segment spans residues 672–692; the sequence is GVYVIIGIIALRIVIYVVQLL. The Cytoplasmic portion of the chain corresponds to 693–857; the sequence is SRLRKGYRPV…IRQGAELALL (165 aa). The short motif at 699-702 is the YXXV motif; contains endocytosis signal element; sequence YRPV. Cys765 carries the S-palmitoyl cysteine; by host lipid modification. A Di-leucine internalization motif motif is present at residues 856 to 857; that stretch reads LL.

In terms of assembly, the mature envelope protein (Env) consists of a homotrimer of non-covalently associated gp120-gp41 heterodimers. The resulting complex protrudes from the virus surface as a spike. There seems to be as few as 10 spikes on the average virion. Interacts with human CD4, CCR5 and CXCR4, to form a P4HB/PDI-CD4-CXCR4-gp120 complex. Gp120 also interacts with the C-type lectins CD209/DC-SIGN and CLEC4M/DC-SIGNR (collectively referred to as DC-SIGN(R)). Gp120 and gp41 interact with GalCer. The mature envelope protein (Env) consists of a homotrimer of non-covalently associated gp120-gp41 heterodimers. The resulting complex protrudes from the virus surface as a spike. There seems to be as few as 10 spikes on the average virion. Post-translationally, specific enzymatic cleavages in vivo yield mature proteins. Envelope glycoproteins are synthesized as an inactive precursor that is heavily N-glycosylated and processed likely by host cell furin in the Golgi to yield the mature SU and TM proteins. The cleavage site between SU and TM requires the minimal sequence [KR]-X-[KR]-R. In terms of processing, palmitoylation of the transmembrane protein and of Env polyprotein (prior to its proteolytic cleavage) is essential for their association with host cell membrane lipid rafts. Palmitoylation is therefore required for envelope trafficking to classical lipid rafts, but not for viral replication.

The protein resides in the virion membrane. It is found in the host cell membrane. It localises to the host endosome membrane. The surface protein gp120 (SU) attaches the virus to the host lymphoid cell by binding to the primary receptor CD4. This interaction induces a structural rearrangement creating a high affinity binding site for a chemokine coreceptor like CXCR4 and/or CCR5. This peculiar 2 stage receptor-interaction strategy allows gp120 to maintain the highly conserved coreceptor-binding site in a cryptic conformation, protected from neutralizing antibodies. Since CD4 also displays a binding site for the disulfide-isomerase P4HB/PDI, a P4HB/PDI-CD4-CXCR4-gp120 complex may form. In that complex, P4HB/PDI could reach and reduce gp120 disulfide bonds, causing major conformational changes in gp120. TXN, another PDI family member could also be involved in disulfide rearrangements in Env during fusion. These changes are transmitted to the transmembrane protein gp41 and are thought to activate its fusogenic potential by unmasking its fusion peptide. Its function is as follows. The surface protein gp120 is a ligand for CD209/DC-SIGN and CLEC4M/DC-SIGNR, which are respectively found on dendritic cells (DCs), and on endothelial cells of liver sinusoids and lymph node sinuses. These interactions allow capture of viral particles at mucosal surfaces by these cells and subsequent transmission to permissive cells. DCs are professional antigen presenting cells, critical for host immunity by inducing specific immune responses against a broad variety of pathogens. They act as sentinels in various tissues where they take up antigen, process it, and present it to T-cells following migration to lymphoid organs. HIV subverts the migration properties of dendritic cells to gain access to CD4+ T-cells in lymph nodes. Virus transmission to permissive T-cells occurs either in trans (without DCs infection, through viral capture and transmission), or in cis (following DCs productive infection, through the usual CD4-gp120 interaction), thereby inducing a robust infection. In trans infection, bound virions remain infectious over days and it is proposed that they are not degraded, but protected in non-lysosomal acidic organelles within the DCs close to the cell membrane thus contributing to the viral infectious potential during DCs' migration from the periphery to the lymphoid tissues. On arrival at lymphoid tissues, intact virions recycle back to DCs' cell surface allowing virus transmission to CD4+ T-cells. Virion capture also seems to lead to MHC-II-restricted viral antigen presentation, and probably to the activation of HIV-specific CD4+ cells. In terms of biological role, the transmembrane protein gp41 (TM) acts as a class I viral fusion protein. Under the current model, the protein has at least 3 conformational states: pre-fusion native state, pre-hairpin intermediate state, and post-fusion hairpin state. During fusion of viral and target intracellular membranes, the coiled coil regions (heptad repeats) assume a trimer-of-hairpins structure, positioning the fusion peptide in close proximity to the C-terminal region of the ectodomain. The formation of this structure appears to drive apposition and subsequent fusion of viral and target cell membranes. Complete fusion occurs in host cell endosomes and is dynamin-dependent, however some lipid transfer might occur at the plasma membrane. The virus undergoes clathrin-dependent internalization long before endosomal fusion, thus minimizing the surface exposure of conserved viral epitopes during fusion and reducing the efficacy of inhibitors targeting these epitopes. Membranes fusion leads to delivery of the nucleocapsid into the cytoplasm. Functionally, the envelope glycoprotein gp160 precursor down-modulates cell surface CD4 antigen by interacting with it in the endoplasmic reticulum and blocking its transport to the cell surface. The gp120-gp41 heterodimer seems to contribute to T-cell depletion during HIV-1 infection. The envelope glycoproteins expressed on the surface of infected cells induce apoptosis through an interaction with uninfected cells expressing the receptor (CD4) and the coreceptors CXCR4 or CCR5. This type of bystander killing may be obtained by at least three distinct mechanisms. First, the interaction between the 2 cells can induce cellular fusion followed by nuclear fusion within the syncytium. Syncytia are condemned to die from apoptosis. Second, the 2 interacting cells may not fuse entirely and simply exchange plasma membrane lipids, after a sort of hemifusion process, followed by rapid death. Third, it is possible that virus-infected cells, on the point of undergoing apoptosis, fuse with CD4-expressing cells, in which case apoptosis is rapidly transmitted from one cell to the other and thus occurs in a sort of contagious fashion. Its function is as follows. The gp120-gp41 heterodimer allows rapid transcytosis of the virus through CD4 negative cells such as simple epithelial monolayers of the intestinal, rectal and endocervical epithelial barriers. Both gp120 and gp41 specifically recognize glycosphingolipids galactosyl-ceramide (GalCer) or 3' sulfo-galactosyl-ceramide (GalS) present in the lipid rafts structures of epithelial cells. Binding to these alternative receptors allows the rapid transcytosis of the virus through the epithelial cells. This transcytotic vesicle-mediated transport of virions from the apical side to the basolateral side of the epithelial cells does not involve infection of the cells themselves. This chain is Envelope glycoprotein gp160 (env), found in Human immunodeficiency virus type 2 subtype A (isolate KR) (HIV-2).